The primary structure comprises 357 residues: MKFVDEAFIDVAAGDGGNGCVSFRHEKYKEFGGPDGGDGGRGGHVFAVADPNLNTLVDFRYSRRHEAKRGEHGKGSDMFGAAGSDITLKMPVGTIISDADTGEVLFELLTPGEVITIAKGGDGGFGNMRFKSAINRAPRQKTPGWPGERRNLKLELKVLADVGLLGMPNAGKSTFIAAVSNARPKIADYPFTTLHPNLGVVRVGPEQSFVVADIPGLIEGASEGAGLGHQFLRHLQRTRLLLHVVDLAPFDEAVDPVAQAKAIVGELKKYDAGLYEKPRWLVLNKLDMVPSEERAARVKDFVKRFKWKGPVFEISALTREGCEPLVQSIFQHVHAQQLAQNAPAEVDPRFAGEPPRG.

Positions 1-159 (MKFVDEAFID…RNLKLELKVL (159 aa)) constitute an Obg domain. An OBG-type G domain is found at 160-334 (ADVGLLGMPN…LVQSIFQHVH (175 aa)). Residues 166 to 173 (GMPNAGKS), 191 to 195 (FTTLH), 213 to 216 (DIPG), 284 to 287 (NKLD), and 315 to 317 (SAL) contribute to the GTP site. Mg(2+)-binding residues include Ser173 and Thr193.

Belongs to the TRAFAC class OBG-HflX-like GTPase superfamily. OBG GTPase family. Monomer. Mg(2+) is required as a cofactor.

It localises to the cytoplasm. Functionally, an essential GTPase which binds GTP, GDP and possibly (p)ppGpp with moderate affinity, with high nucleotide exchange rates and a fairly low GTP hydrolysis rate. Plays a role in control of the cell cycle, stress response, ribosome biogenesis and in those bacteria that undergo differentiation, in morphogenesis control. The polypeptide is GTPase Obg (Acidovorax ebreus (strain TPSY) (Diaphorobacter sp. (strain TPSY))).